The chain runs to 347 residues: D-alanine--D-alanine ligase (347 aa).

Residues 131–333 (KRVLESAGIA…YPELIERLVD (203 aa)) form the ATP-grasp domain. 161-216 (EEKLAYPVFTKPSNMGSSVGISKSENQEELRPALELAFRYDSRVLVEQGVNAREIE) is a binding site for ATP. Residues D287, E300, and N302 each contribute to the Mg(2+) site.

It belongs to the D-alanine--D-alanine ligase family. Requires Mg(2+) as cofactor. Mn(2+) is required as a cofactor.

Its subcellular location is the cytoplasm. It carries out the reaction 2 D-alanine + ATP = D-alanyl-D-alanine + ADP + phosphate + H(+). Its pathway is cell wall biogenesis; peptidoglycan biosynthesis. Its function is as follows. Cell wall formation. The sequence is that of D-alanine--D-alanine ligase from Streptococcus pneumoniae (strain Taiwan19F-14).